The chain runs to 154 residues: MPKGEGKLIAQNKKAHHDYFIEETYEAGLVLQGTEIKSIRAGKVNLKDSFAKVEKGEVFLHNMHISPYEQGNRYNHDPLRTRKLLLHRREISKLIGYTKEQGYTLVPLKLYIKNGFAKLLLGVGKGKKKYDKREDMKKKEAQREVERAFRERQK.

The segment at 126 to 154 (GKKKYDKREDMKKKEAQREVERAFRERQK) is disordered. Basic and acidic residues predominate over residues 131–154 (DKREDMKKKEAQREVERAFRERQK).

Belongs to the SmpB family.

The protein localises to the cytoplasm. Functionally, required for rescue of stalled ribosomes mediated by trans-translation. Binds to transfer-messenger RNA (tmRNA), required for stable association of tmRNA with ribosomes. tmRNA and SmpB together mimic tRNA shape, replacing the anticodon stem-loop with SmpB. tmRNA is encoded by the ssrA gene; the 2 termini fold to resemble tRNA(Ala) and it encodes a 'tag peptide', a short internal open reading frame. During trans-translation Ala-aminoacylated tmRNA acts like a tRNA, entering the A-site of stalled ribosomes, displacing the stalled mRNA. The ribosome then switches to translate the ORF on the tmRNA; the nascent peptide is terminated with the 'tag peptide' encoded by the tmRNA and targeted for degradation. The ribosome is freed to recommence translation, which seems to be the essential function of trans-translation. This is SsrA-binding protein from Anoxybacillus flavithermus (strain DSM 21510 / WK1).